The primary structure comprises 68 residues: Amphipathic peptide OcyC1 (68 aa).

A signal peptide spans 1 to 23 (MKAQLCILLIALVLFQTFSQSDA). Position 36 is a phenylalanine amide (Phe36). Positions 38 to 68 (RRGLNDLDDLDELFDGEISQADVDFLNELMR) are excised as a propeptide.

The protein belongs to the non-disulfide-bridged peptide (NDBP) superfamily. Short antimicrobial peptide (group 4) family. Expressed by the venom gland.

It is found in the secreted. It localises to the target cell membrane. In terms of biological role, antimicrobial peptide. Inhibits the growth of Gram-positive and Gram-negative bacteria. Shows antifungal activity with MIC values ranging from 12.5 to 25 uM. Also shows an inhibitory activity on C.albicans biofilms at high concentrations. Shows low cytotoxic activity and has weak hemolytic activity. This is Amphipathic peptide OcyC1 from Opisthacanthus cayaporum (South American scorpion).